A 402-amino-acid polypeptide reads, in one-letter code: Deoxyguanosinetriphosphate triphosphohydrolase-like protein 2 (402 aa).

Positions 72 to 215 (RLTHSLEVAQ…MDLADEIAYA (144 aa)) constitute an HD domain.

The protein belongs to the dGTPase family. Type 2 subfamily.

The polypeptide is Deoxyguanosinetriphosphate triphosphohydrolase-like protein 2 (Vibrio cholerae serotype O1 (strain ATCC 39315 / El Tor Inaba N16961)).